An 880-amino-acid chain; its full sequence is Valine--tRNA ligase (880 aa).

The short motif at 49–59 is the 'HIGH' region element; the sequence is PNVTGKLHLGH. The 'KMSKS' region motif lies at 525 to 529; that stretch reads KMSKS. Lysine 528 provides a ligand contact to ATP. Residues 809–880 are a coiled coil; sequence LEGLINIEEE…VKARLAELKR (72 aa).

It belongs to the class-I aminoacyl-tRNA synthetase family. ValS type 1 subfamily. Monomer.

It is found in the cytoplasm. The enzyme catalyses tRNA(Val) + L-valine + ATP = L-valyl-tRNA(Val) + AMP + diphosphate. Catalyzes the attachment of valine to tRNA(Val). As ValRS can inadvertently accommodate and process structurally similar amino acids such as threonine, to avoid such errors, it has a 'posttransfer' editing activity that hydrolyzes mischarged Thr-tRNA(Val) in a tRNA-dependent manner. This is Valine--tRNA ligase from Geobacillus kaustophilus (strain HTA426).